We begin with the raw amino-acid sequence, 141 residues long: MVDERDKIILDILSKDARTPFTEIAKILGISETAVRKRVKALEEKGIIEGYTIKINPKKLGYSLVTITGVDTRPEKLFEVAEKLKEFEFVRELYLSSGDHMIMAVIWAKDGEDLADIISNKIGKIDGVTKVCPAIILERLK.

The HTH asnC-type domain occupies 2 to 63 (VDERDKIILD…KINPKKLGYS (62 aa)). Residues 21-40 (FTEIAKILGISETAVRKRVK) constitute a DNA-binding region (H-T-H motif).

In terms of assembly, homooctamer; tetramer of dimers.

DNA-binding protein that negatively regulates its own transcription. Interferes with RNA polymerase (RNAP) recruitment by inhibiting the association of RNAP with the TBP-TFB promoter complex. The protein is HTH-type transcriptional regulator LrpA (lrpA) of Pyrococcus abyssi (strain GE5 / Orsay).